The following is a 292-amino-acid chain: Lipoyl synthase (292 aa).

Cysteine 38, cysteine 43, cysteine 49, cysteine 64, cysteine 68, cysteine 71, and serine 277 together coordinate [4Fe-4S] cluster. One can recognise a Radical SAM core domain in the interval 50–266 (WSKGTATFLL…REIALDAGFR (217 aa)).

The protein belongs to the radical SAM superfamily. Lipoyl synthase family. [4Fe-4S] cluster serves as cofactor.

It localises to the cytoplasm. The enzyme catalyses [[Fe-S] cluster scaffold protein carrying a second [4Fe-4S](2+) cluster] + N(6)-octanoyl-L-lysyl-[protein] + 2 oxidized [2Fe-2S]-[ferredoxin] + 2 S-adenosyl-L-methionine + 4 H(+) = [[Fe-S] cluster scaffold protein] + N(6)-[(R)-dihydrolipoyl]-L-lysyl-[protein] + 4 Fe(3+) + 2 hydrogen sulfide + 2 5'-deoxyadenosine + 2 L-methionine + 2 reduced [2Fe-2S]-[ferredoxin]. The protein operates within protein modification; protein lipoylation via endogenous pathway; protein N(6)-(lipoyl)lysine from octanoyl-[acyl-carrier-protein]: step 2/2. In terms of biological role, catalyzes the radical-mediated insertion of two sulfur atoms into the C-6 and C-8 positions of the octanoyl moiety bound to the lipoyl domains of lipoate-dependent enzymes, thereby converting the octanoylated domains into lipoylated derivatives. In Chlorobaculum parvum (strain DSM 263 / NCIMB 8327) (Chlorobium vibrioforme subsp. thiosulfatophilum), this protein is Lipoyl synthase.